Consider the following 377-residue polypeptide: Aquaporin-2 (377 aa).

The Cytoplasmic segment spans residues 1–14 (MAANKGINGGIKNH). A helical transmembrane segment spans residues 15 to 35 (FIAFLGEFVGTFLFLFFAYGG). Residues 36 to 56 (TQTANQTSQKNPSIVASPDIN) lie on the Extracellular side of the membrane. A glycan (N-linked (GlcNAc...) asparagine) is linked at N40. The chain crosses the membrane as a helical span at residues 57 to 77 (QLLYIALIFGFSLTVNVWIFF). Residues 78–87 (RVSGGLFNPA) are Cytoplasmic-facing. Positions 85–87 (NPA) match the NPA 1 motif. A helical transmembrane segment spans residues 88-108 (VTIALCLVGVVGPVRSIFIFI). Over 109-144 (AQVVASIAAAAAVRGLLPGDTVLFSCALAPGTSIAQ) the chain is Extracellular. A helical transmembrane segment spans residues 145–165 (GLFLEMFFTIELVFTILMLAA). The Cytoplasmic segment spans residues 166 to 171 (EKTKVT). A helical membrane pass occupies residues 172 to 192 (FVAPVGIGLSLFVAELMGVAW). The Extracellular segment spans residues 193–215 (TGGALNPARAFGAEVIGGFRGYH). Positions 198–200 (NPA) match the NPA 2 motif. The chain crosses the membrane as a helical span at residues 216–236 (WIYWLGPLMGAVLAAGFYKVI). The Cytoplasmic portion of the chain corresponds to 237 to 377 (KFLNYEQVNG…ANAQNRAKTP (141 aa)). 2 disordered regions span residues 278–332 (LFQT…RENE) and 358–377 (RLSG…AKTP). 2 stretches are compositionally biased toward polar residues: residues 315–328 (PAQQ…ASTI) and 368–377 (ANAQNRAKTP).

It belongs to the MIP/aquaporin (TC 1.A.8) family.

Its subcellular location is the membrane. The enzyme catalyses H2O(in) = H2O(out). It catalyses the reaction glycerol(in) = glycerol(out). In terms of biological role, water channel required to facilitate the transport of water across membranes. Involved in conidiation. The chain is Aquaporin-2 from Botryotinia fuckeliana (strain B05.10) (Noble rot fungus).